The following is a 251-amino-acid chain: Vacuolar protein sorting-associated protein 37D (251 aa).

In terms of domain architecture, VPS37 C-terminal spans 93–182 (AENCADKLQR…RRRERSAQPA (90 aa)). The interval 174–251 (RRERSAQPAP…RPSQPEPPHR (78 aa)) is disordered. The segment covering 221 to 251 (PVPPLKGSPGCPLGPAPLLSPRPSQPEPPHR) has biased composition (pro residues).

The protein belongs to the VPS37 family. Component of the ESCRT-I complex (endosomal sorting complex required for transport I) which consists of TSG101, VPS28, a VPS37 protein (VPS37A to -D) and MVB12A or MVB12B in a 1:1:1:1 stoichiometry. Interacts with TSG101 and MVB12A. Component of the ESCRT-I complex (endosomal sorting complex required for transport I) which consists of TSG101, VPS28, a VPS37 protein (VPS37A to -D) and UBAP1 in a 1:1:1:1 stoichiometry.

The protein localises to the late endosome membrane. Component of the ESCRT-I complex, a regulator of vesicular trafficking process. Required for the sorting of endocytic ubiquitinated cargos into multivesicular bodies. May be involved in cell growth and differentiation. This is Vacuolar protein sorting-associated protein 37D from Homo sapiens (Human).